A 298-amino-acid polypeptide reads, in one-letter code: GTPase Era (298 aa).

The region spanning 8-176 (RCGRIAVIGR…VSDLLALLPE (169 aa)) is the Era-type G domain. The segment at 16–23 (GRPNVGKS) is G1. 16-23 (GRPNVGKS) is a binding site for GTP. The G2 stretch occupies residues 42–46 (QTTRH). A G3 region spans residues 63-66 (DTPG). GTP is bound by residues 63–67 (DTPGL) and 125–128 (NKID). Residues 125–128 (NKID) are G4. A G5 region spans residues 155 to 157 (VSA). The KH type-2 domain maps to 199-283 (VREQVMRQLG…FLETWVRVRK (85 aa)).

Belongs to the TRAFAC class TrmE-Era-EngA-EngB-Septin-like GTPase superfamily. Era GTPase family. Monomer.

It is found in the cytoplasm. The protein resides in the cell inner membrane. Its function is as follows. An essential GTPase that binds both GDP and GTP, with rapid nucleotide exchange. Plays a role in 16S rRNA processing and 30S ribosomal subunit biogenesis and possibly also in cell cycle regulation and energy metabolism. The chain is GTPase Era from Xylella fastidiosa (strain M12).